We begin with the raw amino-acid sequence, 233 residues long: MNKILLQCDNLCKRYQEGTVQTDVLHDVSFSIGEGEMMAIVGSSGSGKSTLLHLLGGLDTPTSGDVIFSGQPMSKLSSAAKAELRNQKLGFIYQFHHLLPDFTALENVAMPLLIGKKKPAEIDARAREMLHAVGLEHRATHRPSELSGGERQRVAIARALVNNPRLVLADEPTGNLDARNADSIFELLGELNRLQGTAFLVVTHDLQLAKRMSRQLEMRDGRLTAELSLMGAE.

The 228-residue stretch at 6–233 folds into the ABC transporter domain; the sequence is LQCDNLCKRY…TAELSLMGAE (228 aa). 42-49 serves as a coordination point for ATP; that stretch reads GSSGSGKS.

It belongs to the ABC transporter superfamily. Lipoprotein translocase (TC 3.A.1.125) family. As to quaternary structure, the complex is composed of two ATP-binding proteins (LolD) and two transmembrane proteins (LolC and LolE).

It localises to the cell inner membrane. Functionally, part of the ABC transporter complex LolCDE involved in the translocation of mature outer membrane-directed lipoproteins, from the inner membrane to the periplasmic chaperone, LolA. Responsible for the formation of the LolA-lipoprotein complex in an ATP-dependent manner. In Salmonella paratyphi A (strain ATCC 9150 / SARB42), this protein is Lipoprotein-releasing system ATP-binding protein LolD.